The primary structure comprises 605 residues: MKTILSSSLVVSMAAALPHYIRSSGIEASLLTDPKAVAGRTVDYIIAGGGLTGLTTAARLTENPNITVLVIESGFYESDRGPLVEDLNAYGEIFGSEVDHAYQTVELATNNLTELIRSGNGLGGSTLVNGGTWTRPHKVQVDSWETVFGNEGWNWENVAAYSLEAERARAPNAKQVAAGHYFDPSCHGTNGTVHVGPRDTGDDYTPIIDALMTTVENMGVPTKKDLGCGDPHGVSMFPNTLHEDQVRSDAAREWLLPNYQRPNLQVLTGQLVGKVLLDQNNTVPKAVGVEFGTHKANTFNVYAKHEVLLAAGSAVSPQILEHSGIGMKSVLDTVGIDTVVDLPVGLNLQDQTTVPVSSRITSAGAGQGQAAYFATFNETFGDYAPQAHALLNSKLEQWAEEAVARGGFHNATALRIQYENYRDWLVNHNVAYSELFLDTAGAVSFTIWDLIPFTRGYVHITDADPYLRLFAYDPQYFLNELDLYGQAAASQLARNLSNTDAMQTYFAGETTPGDNLAYDASLSDWAEYIKYNFRPNYHGVGTCSMMKKELGGVVDSSARVYGVDSLRVIDGSIPPTQVSSHVMTVFYAMALKISDAILADYASSQ.

The N-terminal stretch at 1–16 is a signal peptide; the sequence is MKTILSSSLVVSMAAA. FAD is bound by residues leucine 51 and threonine 52. Asparagine 65 is a glycosylation site (N-linked (GlcNAc...) asparagine). FAD is bound at residue glutamate 72. Asparagine 111 carries N-linked (GlcNAc...) asparagine glycosylation. 4 residues coordinate FAD: serine 125, asparagine 129, glycine 130, and threonine 132. A disulfide bond links cysteine 186 and cysteine 228. Asparagine 190 carries an N-linked (GlcNAc...) asparagine glycan. Valine 272 serves as a coordination point for FAD. 4 N-linked (GlcNAc...) asparagine glycosylation sites follow: asparagine 280, asparagine 377, asparagine 410, and asparagine 495. The active-site Proton acceptor is histidine 538. Arginine 559 and valine 560 together coordinate O2. Positions 571 and 583 each coordinate FAD.

This sequence belongs to the GMC oxidoreductase family. In terms of assembly, homodimer. FAD serves as cofactor.

It localises to the secreted. It is found in the cell wall. Its subcellular location is the cytoplasm. The protein localises to the extracellular space. The protein resides in the extracellular matrix. The enzyme catalyses beta-D-glucose + O2 = D-glucono-1,5-lactone + H2O2. Its function is as follows. Glucose oxidase catalyzes the oxidation of beta-D-glucose to D-glucono-delta-lactone and hydrogen peroxide in the presence of molecular oxygen. Acts as a critical factor modulating pathogenicity by controlling transcription of genes important for fungal secondary metabolism and infection such as those coding for enzymes involved in degradation of the host cell wall. In Aspergillus carbonarius (strain ITEM 5010), this protein is Glucose oxidase.